Here is a 907-residue protein sequence, read N- to C-terminus: Protein translocase subunit SecA (907 aa).

ATP contacts are provided by residues Gln-87, 105-109, and Asp-513; that span reads GEGKT. The segment covering 841–853 has biased composition (basic and acidic residues); the sequence is EAQRRAQAEEAAR. The interval 841–907 is disordered; sequence EAQRRAQAEE…KYKQCHGQIN (67 aa). Residues 854 to 865 are compositionally biased toward low complexity; that stretch reads RAQAQHASAQSQ. The span at 872–887 shows a compositional bias: basic and acidic residues; the sequence is EGHHQPVVRDERKVGR. Zn(2+) contacts are provided by Cys-891, Cys-893, Cys-902, and His-903.

Belongs to the SecA family. In terms of assembly, monomer and homodimer. Part of the essential Sec protein translocation apparatus which comprises SecA, SecYEG and auxiliary proteins SecDF-YajC and YidC. The cofactor is Zn(2+).

The protein resides in the cell inner membrane. The protein localises to the cytoplasm. The enzyme catalyses ATP + H2O + cellular proteinSide 1 = ADP + phosphate + cellular proteinSide 2.. In terms of biological role, part of the Sec protein translocase complex. Interacts with the SecYEG preprotein conducting channel. Has a central role in coupling the hydrolysis of ATP to the transfer of proteins into and across the cell membrane, serving both as a receptor for the preprotein-SecB complex and as an ATP-driven molecular motor driving the stepwise translocation of polypeptide chains across the membrane. The protein is Protein translocase subunit SecA of Vibrio vulnificus (strain YJ016).